The chain runs to 329 residues: Beta-ketoacyl-[acyl-carrier-protein] synthase III (329 aa).

Residues cysteine 113 and histidine 256 contribute to the active site. Positions glutamine 257–arginine 261 are ACP-binding. Asparagine 286 is a catalytic residue.

This sequence belongs to the thiolase-like superfamily. FabH family. As to quaternary structure, homodimer.

Its subcellular location is the cytoplasm. The catalysed reaction is malonyl-[ACP] + acetyl-CoA + H(+) = 3-oxobutanoyl-[ACP] + CO2 + CoA. It participates in lipid metabolism; fatty acid biosynthesis. Functionally, catalyzes the condensation reaction of fatty acid synthesis by the addition to an acyl acceptor of two carbons from malonyl-ACP. Catalyzes the first condensation reaction which initiates fatty acid synthesis and may therefore play a role in governing the total rate of fatty acid production. Possesses both acetoacetyl-ACP synthase and acetyl transacylase activities. Its substrate specificity determines the biosynthesis of branched-chain and/or straight-chain of fatty acids. In Natranaerobius thermophilus (strain ATCC BAA-1301 / DSM 18059 / JW/NM-WN-LF), this protein is Beta-ketoacyl-[acyl-carrier-protein] synthase III.